Reading from the N-terminus, the 144-residue chain is Large ribosomal subunit protein uL15 (144 aa).

Positions 20–49 (GRGIGSGLGKTGGRGHKGQKSRSGGFHKVG) are disordered. A compositionally biased stretch (gly residues) spans 21 to 31 (RGIGSGLGKTG).

Belongs to the universal ribosomal protein uL15 family. In terms of assembly, part of the 50S ribosomal subunit.

In terms of biological role, binds to the 23S rRNA. The protein is Large ribosomal subunit protein uL15 of Neisseria meningitidis serogroup C (strain 053442).